The chain runs to 269 residues: MTPLKIAIAGANGRMGRVLVEAVNNHPDTVLSGALEHSGSEALGLDAGYAVGLKTGIAISDDVDAVLAQSDVLIDFTRPEPTLKHLQKCVEKQVNIIIGTTGFDDTGKAAIHTAAEKTGIVFAANFSVGVNLTFHILDTVARVLNEGYDIEIIEGHHRHKVDAPSGTALRMGEVIAGALGRDLKQCAVYGREGHTGPRDPSTIGFATVRAGDIVGDHTALFATDGERVEITHKASSRMTFAAGAVRAAVWVNGKTGLYDMQDVLGLNNR.

NAD(+) is bound by residues 10–15 (GANGRM), E36, 99–101 (GTT), and 123–126 (AANF). The Proton donor/acceptor role is filled by H156. H157 provides a ligand contact to (S)-2,3,4,5-tetrahydrodipicolinate. Catalysis depends on K160, which acts as the Proton donor. 166–167 (GT) is a binding site for (S)-2,3,4,5-tetrahydrodipicolinate.

It belongs to the DapB family.

Its subcellular location is the cytoplasm. The catalysed reaction is (S)-2,3,4,5-tetrahydrodipicolinate + NAD(+) + H2O = (2S,4S)-4-hydroxy-2,3,4,5-tetrahydrodipicolinate + NADH + H(+). The enzyme catalyses (S)-2,3,4,5-tetrahydrodipicolinate + NADP(+) + H2O = (2S,4S)-4-hydroxy-2,3,4,5-tetrahydrodipicolinate + NADPH + H(+). It functions in the pathway amino-acid biosynthesis; L-lysine biosynthesis via DAP pathway; (S)-tetrahydrodipicolinate from L-aspartate: step 4/4. Catalyzes the conversion of 4-hydroxy-tetrahydrodipicolinate (HTPA) to tetrahydrodipicolinate. This Neisseria meningitidis serogroup B (strain ATCC BAA-335 / MC58) protein is 4-hydroxy-tetrahydrodipicolinate reductase.